The following is a 446-amino-acid chain: Argininosuccinate synthase (446 aa).

Residues 17-25 (AFSGGLDTS) and alanine 43 each bind ATP. Tyrosine 99 is a binding site for L-citrulline. Residues glycine 129 and threonine 131 each coordinate ATP. Threonine 131, asparagine 135, and aspartate 136 together coordinate L-aspartate. Asparagine 135 is an L-citrulline binding site. An ATP-binding site is contributed by aspartate 136. 2 residues coordinate L-citrulline: arginine 139 and serine 192. Aspartate 194 is a binding site for ATP. Positions 201, 203, and 280 each coordinate L-citrulline.

The protein belongs to the argininosuccinate synthase family. Type 2 subfamily. As to quaternary structure, homotetramer.

Its subcellular location is the cytoplasm. The catalysed reaction is L-citrulline + L-aspartate + ATP = 2-(N(omega)-L-arginino)succinate + AMP + diphosphate + H(+). It participates in amino-acid biosynthesis; L-arginine biosynthesis; L-arginine from L-ornithine and carbamoyl phosphate: step 2/3. The polypeptide is Argininosuccinate synthase (Methylibium petroleiphilum (strain ATCC BAA-1232 / LMG 22953 / PM1)).